We begin with the raw amino-acid sequence, 850 residues long: AdoMet-dependent rRNA methyltransferase SPB1 (850 aa).

Gly58, Trp60, Asp78, Asp94, and Asp119 together coordinate S-adenosyl-L-methionine. Residue Lys159 is the Proton acceptor of the active site. The segment covering 273–282 (GETNEMTWTP) has biased composition (polar residues). Disordered regions lie at residues 273–305 (GETN…ARDE), 388–414 (IDKE…NEMK), 529–569 (GISD…RTLN), and 620–646 (AKKN…KQDD). Over residues 388 to 400 (IDKELSELGEREK) the composition is skewed to basic and acidic residues. Residues 397-425 (EREKARKKRERRRRNEMKQREIQRMQMNM) are a coiled coil. Residues 401-411 (ARKKRERRRRN) are compositionally biased toward basic residues. 2 stretches are compositionally biased toward acidic residues: residues 537 to 561 (DESD…DEDD) and 628 to 638 (SDSEDEEDDIV). Residues 746–773 (LEAKGRKKMRALRRLEQMKKKSELINED) are a coiled coil. The disordered stretch occupies residues 811-850 (KNKGIAGRPRGVTGKYKMVDGTMKKEQRAIRRIKKKMGKK). The span at 840–850 (IRRIKKKMGKK) shows a compositional bias: basic residues.

Belongs to the class I-like SAM-binding methyltransferase superfamily. RNA methyltransferase RlmE family. SPB1 subfamily. As to quaternary structure, component of the nucleolar and nucleoplasmic pre-60S ribosomal particle.

Its subcellular location is the nucleus. It is found in the nucleolus. The enzyme catalyses a ribonucleotide in rRNA + S-adenosyl-L-methionine = a 2'-O-methylribonucleotide in rRNA + S-adenosyl-L-homocysteine + H(+). Functionally, required for proper assembly of pre-ribosomal particles during the biogenesis of the 60S ribosomal subunit. The protein is AdoMet-dependent rRNA methyltransferase SPB1 of Yarrowia lipolytica (strain CLIB 122 / E 150) (Yeast).